We begin with the raw amino-acid sequence, 294 residues long: Ribosomal protein L11 methyltransferase (294 aa).

Residues Thr-144, Gly-165, Asp-187, and Asn-229 each coordinate S-adenosyl-L-methionine.

This sequence belongs to the methyltransferase superfamily. PrmA family.

The protein resides in the cytoplasm. It carries out the reaction L-lysyl-[protein] + 3 S-adenosyl-L-methionine = N(6),N(6),N(6)-trimethyl-L-lysyl-[protein] + 3 S-adenosyl-L-homocysteine + 3 H(+). Its function is as follows. Methylates ribosomal protein L11. The protein is Ribosomal protein L11 methyltransferase of Pseudomonas paraeruginosa (strain DSM 24068 / PA7) (Pseudomonas aeruginosa (strain PA7)).